Here is a 366-residue protein sequence, read N- to C-terminus: Chorismate synthase (366 aa).

NADP(+)-binding residues include arginine 48 and arginine 54. FMN-binding positions include 132-134 (RSS), 244-245 (NA), glycine 289, 304-308 (KPTSS), and arginine 330.

This sequence belongs to the chorismate synthase family. Homotetramer. Requires FMNH2 as cofactor.

The enzyme catalyses 5-O-(1-carboxyvinyl)-3-phosphoshikimate = chorismate + phosphate. The protein operates within metabolic intermediate biosynthesis; chorismate biosynthesis; chorismate from D-erythrose 4-phosphate and phosphoenolpyruvate: step 7/7. Functionally, catalyzes the anti-1,4-elimination of the C-3 phosphate and the C-6 proR hydrogen from 5-enolpyruvylshikimate-3-phosphate (EPSP) to yield chorismate, which is the branch point compound that serves as the starting substrate for the three terminal pathways of aromatic amino acid biosynthesis. This reaction introduces a second double bond into the aromatic ring system. In Methylobacterium radiotolerans (strain ATCC 27329 / DSM 1819 / JCM 2831 / NBRC 15690 / NCIMB 10815 / 0-1), this protein is Chorismate synthase.